We begin with the raw amino-acid sequence, 202 residues long: MAIILPDLPYAYDALEPHIDAETMTLHHDKHHATYVANANAALEKHPEIGEDLEALLADVSQIPEDIRQAVINNGGGHLNHALFWELMSPEETQISQELSEDINATFGSFEDFKAAFTAAATGRFGSGWAWLVVNAEGKLEVLSTANQDTPIMEGKKPILGLDVWEHAYYLNYRNVRPNYIKAFFEIINWNKVNELYQAAKA.

The Fe(3+) site is built by His-27, His-81, Asp-163, and His-167. Residues His-27, His-81, Asp-163, and His-167 each coordinate Mn(2+).

The protein belongs to the iron/manganese superoxide dismutase family. Mn(2+) serves as cofactor. It depends on Fe(3+) as a cofactor.

It carries out the reaction 2 superoxide + 2 H(+) = H2O2 + O2. In terms of biological role, destroys superoxide anion radicals which are normally produced within the cells and which are toxic to biological systems. Catalyzes the dismutation of superoxide anion radicals into O2 and H2O2 by successive reduction and oxidation of the transition metal ion at the active site. In Streptococcus agalactiae serotype V (strain ATCC BAA-611 / 2603 V/R), this protein is Superoxide dismutase [Mn/Fe] (sodA).